Reading from the N-terminus, the 412-residue chain is MPHSTHKELLLGIMAGTAGISLLVLWYHKILKPRTTMIFPKFLSLGKKSDSLTLQDESYSEQGTSVVFQRGQLQILEKLNELLTNVEELKEEIKFLKETIPKLEECIQDELGVRVTVHQVSPQHRARKKKTTTTTVQRPATSNSSEEAESEGGYITANTDTEEQSFPVPKALNTHIEDLKLDVLLQKVDHLRLNEAHKMESFELLCDHKEKFSEEIEFLWRLVRAYGDMYDLSTNTQEKKHYANVGKTLGERAITRAPMNGHCHLWYALLCGYVSEFEGLQNKINCGHLFKKHLDIAIQLLPEEPVLYYLKGRYCYTVSKLSWIEKKMAATLFGEIPSSTVHEALHNFLKTEELQPGYSVSNYMYVAKCYVDLGESREAWKFCNLALLLPIVTKEDKDAHKEVKKIIGSLKR.

The chain crosses the membrane as a helical span at residues 9-28 (LLLGIMAGTAGISLLVLWYH). A Phosphoserine modification is found at Ser-51. Residues 72-110 (QLQILEKLNELLTNVEELKEEIKFLKETIPKLEECIQDE) adopt a coiled-coil conformation. The residue at position 121 (Ser-121) is a Phosphoserine. Residues 122–153 (PQHRARKKKTTTTTVQRPATSNSSEEAESEGG) are disordered. Thr-141 is modified (phosphothreonine). A Phosphotyrosine modification is found at Tyr-154. Thr-156 and Thr-159 each carry phosphothreonine.

The protein belongs to the RMDN family. Interacts with microtubules.

It localises to the membrane. Its subcellular location is the cytoplasm. It is found in the cytoskeleton. The protein localises to the spindle. The protein resides in the spindle pole. This chain is Regulator of microtubule dynamics protein 2 (Rmdn2), found in Rattus norvegicus (Rat).